A 943-amino-acid chain; its full sequence is Synaptotagmin-like protein 2 (943 aa).

The 57-residue stretch at Met1 to Ala57 folds into the RabBD domain. Disordered regions lie at residues Arg77–Trp99, Glu118–His291, and Glu361–Gly613. Basic and acidic residues predominate over residues Gln82–Trp99. The span at Ala125–Ser138 shows a compositional bias: low complexity. The segment covering Ser174–Thr192 has biased composition (polar residues). Over residues Lys194 to Ser205 the composition is skewed to basic and acidic residues. 3 stretches are compositionally biased toward polar residues: residues Pro382–Gln394, Lys404–Phe416, and Glu426–Thr440. The span at Glu524–Gln537 shows a compositional bias: basic and acidic residues. Polar residues predominate over residues Ser549–Ser560. Residues Ser603–Gly613 show a composition bias toward low complexity. C2 domains are found at residues Val637–Tyr762 and Asn777–Met906.

In terms of assembly, monomer. Binds NRXN1. Binds RAB27A that has been activated by GTP-binding via its N-terminus. Interacts with RAB27B.

The protein resides in the cell membrane. Its function is as follows. May act as a RAB27A effector protein and play a role in cytotoxic granule exocytosis in lymphocytes. The protein is Synaptotagmin-like protein 2 (SYTL2) of Bos taurus (Bovine).